Here is a 150-residue protein sequence, read N- to C-terminus: Arginine repressor (150 aa).

It belongs to the ArgR family.

Its subcellular location is the cytoplasm. Its pathway is amino-acid biosynthesis; L-arginine biosynthesis [regulation]. Regulates arginine biosynthesis genes. This is Arginine repressor from Desulforudis audaxviator (strain MP104C).